A 37-amino-acid chain; its full sequence is Large ribosomal subunit protein bL36 (37 aa).

It belongs to the bacterial ribosomal protein bL36 family.

The chain is Large ribosomal subunit protein bL36 from Streptomyces avermitilis (strain ATCC 31267 / DSM 46492 / JCM 5070 / NBRC 14893 / NCIMB 12804 / NRRL 8165 / MA-4680).